A 345-amino-acid chain; its full sequence is Uroporphyrinogen decarboxylase (345 aa).

Substrate is bound by residues 23–27 (RQAGR), D73, Y149, T203, and H319.

It belongs to the uroporphyrinogen decarboxylase family. Homodimer.

It localises to the cytoplasm. It catalyses the reaction uroporphyrinogen III + 4 H(+) = coproporphyrinogen III + 4 CO2. The protein operates within porphyrin-containing compound metabolism; protoporphyrin-IX biosynthesis; coproporphyrinogen-III from 5-aminolevulinate: step 4/4. In terms of biological role, catalyzes the decarboxylation of four acetate groups of uroporphyrinogen-III to yield coproporphyrinogen-III. This chain is Uroporphyrinogen decarboxylase, found in Vesicomyosocius okutanii subsp. Calyptogena okutanii (strain HA).